Here is a 529-residue protein sequence, read N- to C-terminus: Cytochrome P450 monooxygenase 136 (529 aa).

The helical transmembrane segment at 9–29 threads the bilayer; sequence SPLALAVLSIATCQLALVWWY. Heme is bound at residue Cys-447.

This sequence belongs to the cytochrome P450 family. It depends on heme as a cofactor.

The protein resides in the membrane. Its pathway is secondary metabolite biosynthesis. Its function is as follows. Cytochrome P450 monooxygenase that is able to use delta(6)-protoilludene as a substrate to produce delta(6)-protoilludene-5-ol. This is Cytochrome P450 monooxygenase 136 from Postia placenta (strain ATCC 44394 / Madison 698-R) (Brown rot fungus).